We begin with the raw amino-acid sequence, 1168 residues long: Zinc finger CCHC domain-containing protein 2 (1168 aa).

4 disordered regions span residues 1–87, 209–242, 561–693, and 932–978; these read MLRM…GGHA, EGSR…CAKL, KRSL…LGTE, and ATSA…SDST. The span at 43-66 shows a compositional bias: pro residues; the sequence is PPPPPPTGLPRGPPPPPPSPPRGL. A compositionally biased stretch (low complexity) spans 67 to 78; the sequence is EPPVASGPTAGA. The span at 216-227 shows a compositional bias: acidic residues; that stretch reads EDEPGGDDEQDA. A compositionally biased stretch (gly residues) spans 233 to 242; sequence GPEGGGCAKL. The span at 574–588 shows a compositional bias: basic and acidic residues; the sequence is PQVEKEKIKKTENRL. Residues 626–635 are compositionally biased toward low complexity; it reads SSESYSSPSS. A compositionally biased stretch (basic and acidic residues) spans 636-655; it reads PRHDGRESLESEEEKDRDTD. The segment covering 932-949 has biased composition (polar residues); that stretch reads ATSAQPASTGISPAQSTV. Pro residues predominate over residues 951–965; it reads PAVPTHTPGPAPSPS. Residues 966–978 show a composition bias toward polar residues; the sequence is PALTHSTAQSDST. The CCHC-type zinc finger occupies 1121-1138; that stretch reads VSCYNCGVSGHYAQDCKQ.

The chain is Zinc finger CCHC domain-containing protein 2 (Zcchc2) from Rattus norvegicus (Rat).